The following is a 568-amino-acid chain: Periplasmic trehalase (568 aa).

Residues 1–38 (MPHAPARSGDAMSAAAPPCCTSLLGLSLSMFVAPCALA) form the signal peptide. Residues R169, 176 to 177 (WD), N213, 222 to 224 (RSQ), 294 to 296 (RPE), and G327 each bind substrate. Catalysis depends on proton donor/acceptor residues D329 and E511. E526 contacts substrate.

It belongs to the glycosyl hydrolase 37 family.

The protein localises to the periplasm. The enzyme catalyses alpha,alpha-trehalose + H2O = alpha-D-glucose + beta-D-glucose. Functionally, provides the cells with the ability to utilize trehalose at high osmolarity by splitting it into glucose molecules that can subsequently be taken up by the phosphotransferase-mediated uptake system. This is Periplasmic trehalase from Xanthomonas campestris pv. campestris (strain B100).